The following is a 395-amino-acid chain: Putative 8-amino-7-oxononanoate synthase (395 aa).

Position 22 (Arg22) interacts with substrate. 109–110 lines the pyridoxal 5'-phosphate pocket; the sequence is GY. Residue His139 participates in substrate binding. Residues Ser187, 212–215, and 241–244 each bind pyridoxal 5'-phosphate; these read DEAH and TFSK. Residue Lys244 is modified to N6-(pyridoxal phosphate)lysine. Thr358 provides a ligand contact to substrate.

Belongs to the class-II pyridoxal-phosphate-dependent aminotransferase family. BioF subfamily. In terms of assembly, homodimer. Pyridoxal 5'-phosphate is required as a cofactor.

It catalyses the reaction 6-carboxyhexanoyl-[ACP] + L-alanine + H(+) = (8S)-8-amino-7-oxononanoate + holo-[ACP] + CO2. The protein operates within cofactor biosynthesis; biotin biosynthesis. In terms of biological role, catalyzes the decarboxylative condensation of pimeloyl-[acyl-carrier protein] and L-alanine to produce 8-amino-7-oxononanoate (AON), [acyl-carrier protein], and carbon dioxide. The protein is Putative 8-amino-7-oxononanoate synthase (bioF) of Magnetococcus marinus (strain ATCC BAA-1437 / JCM 17883 / MC-1).